A 265-amino-acid chain; its full sequence is Putative methyltransferase 235L (265 aa).

A signal peptide spans 1–17 (MDICICYFFTILTTISC).

The protein belongs to the methyltransferase superfamily.

In Acheta domesticus (House cricket), this protein is Putative methyltransferase 235L.